The primary structure comprises 88 residues: Small ribosomal subunit protein uS15c (88 aa).

This sequence belongs to the universal ribosomal protein uS15 family. Part of the 30S ribosomal subunit.

The protein resides in the plastid. It is found in the chloroplast. This chain is Small ribosomal subunit protein uS15c (rps15), found in Aethionema cordifolium (Lebanon stonecress).